Here is a 744-residue protein sequence, read N- to C-terminus: Leucine-rich repeat extensin-like protein 1 (744 aa).

The first 26 residues, 1 to 26 (MLFPPLRSLFLFTLLLSSVCFLQIKA), serve as a signal peptide directing secretion. N-linked (GlcNAc...) asparagine glycans are attached at residues Asn71 and Asn77. LRR repeat units lie at residues 122–145 (LSDL…TFNR), 147–170 (KLLY…VLSL), 171–194 (PSLK…LFDR), 196–217 (LDAI…MGNS), 219–240 (VSAL…IGQM), 241–265 (GKTL…IGNL), 266–289 (KKVT…VGNM), 290–313 (KSLE…ICQL), and 315–336 (NLEN…CAAS). Asn253 carries N-linked (GlcNAc...) asparagine glycosylation. Asn318 and Asn344 each carry an N-linked (GlcNAc...) asparagine glycan. One copy of the LRR 10 repeat lies at 381–404 (FSPPPPTFKMSPEVRTLPPPIYVY). The segment at 382–744 (SPPPPTFKMS…ASPPPPPSYY (363 aa)) is contains the Ser-Pro(4) repeats. 4 disordered regions span residues 408–445 (PPPP…PPPP), 518–537 (VYSS…PESS), 555–576 (PSPV…VYYP), and 658–744 (PPPS…PSYY). Positions 430-439 (SKMSPSVRAY) are enriched in low complexity. A compositionally biased stretch (pro residues) spans 704–729 (YEPPPEYSYSSSPPPPSPTSYFPPMP).

Hydroxylated on proline residues in the S-P-P-P-P repeat. In terms of processing, O-glycosylated on hydroxyprolines. In terms of tissue distribution, expressed in root hair cells (at protein level).

The protein localises to the secreted. It is found in the cell wall. Its function is as follows. Modulates cell morphogenesis by regulating cell wall formation and assembly, and/or growth polarization. Together with LRX2, component of the extracellular mechanism regulating root hair morphogenesis and elongation. This is Leucine-rich repeat extensin-like protein 1 (LRX1) from Arabidopsis thaliana (Mouse-ear cress).